Here is a 181-residue protein sequence, read N- to C-terminus: uncharacterized protein (181 aa).

The disordered stretch occupies residues 162 to 181; the sequence is QARGPAGTRTPQRRCSSHEA.

This is an uncharacterized protein from Homo sapiens (Human).